We begin with the raw amino-acid sequence, 383 residues long: Putative glutamate--cysteine ligase 2 (383 aa).

It belongs to the glutamate--cysteine ligase type 2 family. YbdK subfamily.

It carries out the reaction L-cysteine + L-glutamate + ATP = gamma-L-glutamyl-L-cysteine + ADP + phosphate + H(+). Functionally, ATP-dependent carboxylate-amine ligase which exhibits weak glutamate--cysteine ligase activity. This Clavibacter sepedonicus (Clavibacter michiganensis subsp. sepedonicus) protein is Putative glutamate--cysteine ligase 2.